Reading from the N-terminus, the 196-residue chain is ATP-dependent Clp protease proteolytic subunit (196 aa).

S96 (nucleophile) is an active-site residue. The active site involves H121.

Belongs to the peptidase S14 family. As to quaternary structure, fourteen ClpP subunits assemble into 2 heptameric rings which stack back to back to give a disk-like structure with a central cavity, resembling the structure of eukaryotic proteasomes.

The protein localises to the cytoplasm. It catalyses the reaction Hydrolysis of proteins to small peptides in the presence of ATP and magnesium. alpha-casein is the usual test substrate. In the absence of ATP, only oligopeptides shorter than five residues are hydrolyzed (such as succinyl-Leu-Tyr-|-NHMec, and Leu-Tyr-Leu-|-Tyr-Trp, in which cleavage of the -Tyr-|-Leu- and -Tyr-|-Trp bonds also occurs).. Cleaves peptides in various proteins in a process that requires ATP hydrolysis. Has a chymotrypsin-like activity. Plays a major role in the degradation of misfolded proteins. The chain is ATP-dependent Clp protease proteolytic subunit from Streptococcus pneumoniae (strain 70585).